Reading from the N-terminus, the 874-residue chain is Probable inorganic carbon transporter subunit DabA (874 aa).

Cysteine 398, aspartate 400, histidine 580, and cysteine 595 together coordinate Zn(2+).

Belongs to the inorganic carbon transporter (TC 9.A.2) DabA family. Forms a complex with DabB. It depends on Zn(2+) as a cofactor.

Its subcellular location is the cell membrane. In terms of biological role, part of an energy-coupled inorganic carbon pump. The chain is Probable inorganic carbon transporter subunit DabA from Bacillus cereus (strain ATCC 10987 / NRS 248).